The sequence spans 258 residues: UPF0246 protein YaaA (258 aa).

This sequence belongs to the UPF0246 family.

The chain is UPF0246 protein YaaA from Escherichia coli O7:K1 (strain IAI39 / ExPEC).